Here is a 140-residue protein sequence, read N- to C-terminus: Small ribosomal subunit protein uS12 (140 aa).

Asp-102 carries the 3-methylthioaspartic acid modification.

Belongs to the universal ribosomal protein uS12 family. As to quaternary structure, part of the 30S ribosomal subunit. Contacts proteins S8 and S17. May interact with IF1 in the 30S initiation complex.

In terms of biological role, with S4 and S5 plays an important role in translational accuracy. Interacts with and stabilizes bases of the 16S rRNA that are involved in tRNA selection in the A site and with the mRNA backbone. Located at the interface of the 30S and 50S subunits, it traverses the body of the 30S subunit contacting proteins on the other side and probably holding the rRNA structure together. The combined cluster of proteins S8, S12 and S17 appears to hold together the shoulder and platform of the 30S subunit. This is Small ribosomal subunit protein uS12 from Geobacillus stearothermophilus (Bacillus stearothermophilus).